A 417-amino-acid chain; its full sequence is Putative F-box protein At4g21240 (417 aa).

Residues 1–12 (MDRREEEEEETG) show a composition bias toward acidic residues. The interval 1–25 (MDRREEEEEETGYGEKGTRNQSKED) is disordered. Over residues 16-25 (KGTRNQSKED) the composition is skewed to basic and acidic residues. Positions 30–76 (GKIFELIPLDMIPDILLRLPAKSAVRFRIVSKLWLSITTRPYFIRSF) constitute an F-box domain.

This Arabidopsis thaliana (Mouse-ear cress) protein is Putative F-box protein At4g21240.